The sequence spans 99 residues: Nucleoid-associated protein SSA_0326 (99 aa).

Residues 1 to 15 show a composition bias toward low complexity; sequence MMNMQSMMKQAQKLQ. Residues 1–23 are disordered; that stretch reads MMNMQSMMKQAQKLQKQMEKGQA.

It belongs to the YbaB/EbfC family. As to quaternary structure, homodimer.

The protein resides in the cytoplasm. The protein localises to the nucleoid. Functionally, binds to DNA and alters its conformation. May be involved in regulation of gene expression, nucleoid organization and DNA protection. The polypeptide is Nucleoid-associated protein SSA_0326 (Streptococcus sanguinis (strain SK36)).